Reading from the N-terminus, the 331-residue chain is Cysteine and histidine-rich domain-containing protein 1 (331 aa).

Ala-2 bears the N-acetylalanine mark. The tract at residues 2–77 (ALLCYNRGCG…KPPEPVKPEV (76 aa)) is interaction with PPP5C. 6 residues coordinate Zn(2+): Cys-5, Cys-10, Cys-24, His-27, Cys-42, and Cys-43. CHORD domains lie at 5 to 64 (CYNR…KGRH) and 157 to 216 (CKNG…RGKH). Thr-47 bears the Phosphothreonine mark. Residue Ser-51 is modified to Phosphoserine. Residues Cys-59, His-64, Cys-157, Cys-162, Cys-176, His-179, Cys-194, Cys-195, Cys-211, and His-216 each coordinate Zn(2+). Residues 62-82 (GRHNSEKPPEPVKPEVKTTEK) are disordered. Positions 64 to 82 (HNSEKPPEPVKPEVKTTEK) are enriched in basic and acidic residues. Positions 65–316 (NSEKPPEPVK…AEPMQWASLE (252 aa)) are interaction with HSP90AA1 and HSP90AB1. In terms of domain architecture, CS spans 227–316 (VVPCRHDWHQ…AEPMQWASLE (90 aa)).

Interacts with HSP90AA1, HSP90AB1, PPP5C, ROCK1 and ROCK2.

Functionally, regulates centrosome duplication, probably by inhibiting the kinase activity of ROCK2. Proposed to act as co-chaperone for HSP90. May play a role in the regulation of NOD1 via a HSP90 chaperone complex. In vitro, has intrinsic chaperone activity. This function may be achieved by inhibiting association of ROCK2 with NPM1. Plays a role in ensuring the localization of the tyrosine kinase receptor EGFR to the plasma membrane, and thus ensures the subsequent regulation of EGFR activity and EGF-induced actin cytoskeleton remodeling. Involved in stress response. Prevents tumorigenesis. The protein is Cysteine and histidine-rich domain-containing protein 1 (Chordc1) of Rattus norvegicus (Rat).